A 598-amino-acid chain; its full sequence is MKHIRNFCIIAHIDHGKSTLADRLLGATQTVTAREEKAQLLDNMDLERERGITIKSHAIQMEYTYQGQEYILNLIDTPGHVDFSYEVSRSIAACEGALLIVDAAQSIQAQTISNLYLALENDLEIIPVLNKVDLPSANPEEVSDDIIDLLGCKLEDIIHASGKTGFGVENILAAIIEKIPHPKGNIEEPLQALIFDSHYNPFRGIEVIFRVKNGQIKKGQKIKFMATGNEYFADEIGTLKLNQVPKNVISAGDVGYLISGIKEAKEVKVGDTLTDAKTPTTNMIVGFEDVKPMVFAGIYPVDTDDYEELRNSMEKLQLNDASLVFAAESSAALGFGFRCGFLGMLHMEIIQERLEREFNMTVITTVPNVSYLAYTKKEPEVGMIVNNPTDLPEPSKLDRVEEPYIKATIITKADFVGNVMGLCIEKRGVITNQTYLTTERVELNFDMPLAEIVFDFYDRLKTVSKGYASFDYSPIGMRTSKLVKLDVLLNATSVDALSALIHESNAYHIGKKMCEKLKELIPRQQFDIPIQAAIGAKIIARETIKALRKDVTAKCYGGDISRKRKLLEKQKKGKKRMRLVGNVEIPQEAFMAVLKLND.

The region spanning 2-183 is the tr-type G domain; it reads KHIRNFCIIA…AIIEKIPHPK (182 aa). GTP contacts are provided by residues 14 to 19 and 130 to 133; these read DHGKST and NKVD.

It belongs to the TRAFAC class translation factor GTPase superfamily. Classic translation factor GTPase family. LepA subfamily.

The protein localises to the cell inner membrane. It carries out the reaction GTP + H2O = GDP + phosphate + H(+). In terms of biological role, required for accurate and efficient protein synthesis under certain stress conditions. May act as a fidelity factor of the translation reaction, by catalyzing a one-codon backward translocation of tRNAs on improperly translocated ribosomes. Back-translocation proceeds from a post-translocation (POST) complex to a pre-translocation (PRE) complex, thus giving elongation factor G a second chance to translocate the tRNAs correctly. Binds to ribosomes in a GTP-dependent manner. This is Elongation factor 4 from Flavobacterium psychrophilum (strain ATCC 49511 / DSM 21280 / CIP 103535 / JIP02/86).